Consider the following 255-residue polypeptide: Triosephosphate isomerase (255 aa).

A substrate-binding site is contributed by 9-11; that stretch reads NWK. The Electrophile role is filled by His-95. Glu-167 serves as the catalytic Proton acceptor. Residues Gly-173, Ser-212, and 233–234 contribute to the substrate site; that span reads GG.

The protein belongs to the triosephosphate isomerase family. Homodimer.

The protein localises to the cytoplasm. The catalysed reaction is D-glyceraldehyde 3-phosphate = dihydroxyacetone phosphate. Its pathway is carbohydrate biosynthesis; gluconeogenesis. The protein operates within carbohydrate degradation; glycolysis; D-glyceraldehyde 3-phosphate from glycerone phosphate: step 1/1. In terms of biological role, involved in the gluconeogenesis. Catalyzes stereospecifically the conversion of dihydroxyacetone phosphate (DHAP) to D-glyceraldehyde-3-phosphate (G3P). This chain is Triosephosphate isomerase, found in Pectobacterium atrosepticum (strain SCRI 1043 / ATCC BAA-672) (Erwinia carotovora subsp. atroseptica).